Here is a 184-residue protein sequence, read N- to C-terminus: Elongation factor P (184 aa).

This sequence belongs to the elongation factor P family.

Its subcellular location is the cytoplasm. It functions in the pathway protein biosynthesis; polypeptide chain elongation. Functionally, involved in peptide bond synthesis. Stimulates efficient translation and peptide-bond synthesis on native or reconstituted 70S ribosomes in vitro. Probably functions indirectly by altering the affinity of the ribosome for aminoacyl-tRNA, thus increasing their reactivity as acceptors for peptidyl transferase. The sequence is that of Elongation factor P from Albidiferax ferrireducens (strain ATCC BAA-621 / DSM 15236 / T118) (Rhodoferax ferrireducens).